The sequence spans 341 residues: GTPase Obg (341 aa).

The region spanning 1–159 (MKFVDEALIK…RNLRLELRVL (159 aa)) is the Obg domain. Positions 128-150 (TRYKSSVNRSPRQTTPGSPGESR) are disordered. Polar residues predominate over residues 129-144 (RYKSSVNRSPRQTTPG). Residues 160–334 (ADVGLLGLPN…LCYALMQLID (175 aa)) form the OBG-type G domain. GTP is bound by residues 166–173 (GLPNAGKS), 191–195 (FTTLH), 213–216 (DIPG), 283–286 (NKID), and 315–317 (SAI). The Mg(2+) site is built by S173 and T193.

It belongs to the TRAFAC class OBG-HflX-like GTPase superfamily. OBG GTPase family. As to quaternary structure, monomer. Mg(2+) serves as cofactor.

It localises to the cytoplasm. In terms of biological role, an essential GTPase which binds GTP, GDP and possibly (p)ppGpp with moderate affinity, with high nucleotide exchange rates and a fairly low GTP hydrolysis rate. Plays a role in control of the cell cycle, stress response, ribosome biogenesis and in those bacteria that undergo differentiation, in morphogenesis control. In Legionella pneumophila subsp. pneumophila (strain Philadelphia 1 / ATCC 33152 / DSM 7513), this protein is GTPase Obg.